A 499-amino-acid polypeptide reads, in one-letter code: RNA polymerase sigma factor SigA (499 aa).

2 stretches are compositionally biased toward basic residues: residues 1–12 (MSSPKKNFKKPQ) and 77–87 (KKRRGRKPKHA). Disordered stretches follow at residues 1–25 (MSSP…LNEE) and 68–89 (QENK…HAPL). Positions 252-322 (LVTSNLRLVV…TRAIADQART (71 aa)) are sigma-70 factor domain-2. The Interaction with polymerase core subunit RpoC signature appears at 276 to 279 (DLIQ). The tract at residues 331–412 (ETINRLAKAE…DTDAQMPDEF (82 aa)) is sigma-70 factor domain-3. The tract at residues 425–480 (LLNNCLSEQEELIVRMRIGMPPYNETKTLDEVSQKIKIPREKIRQIETKAIRKLRQ) is sigma-70 factor domain-4. The H-T-H motif DNA-binding region spans 453–472 (LDEVSQKIKIPREKIRQIET).

The protein belongs to the sigma-70 factor family. RpoD/SigA subfamily. Interacts transiently with the RNA polymerase catalytic core.

It localises to the cytoplasm. In terms of biological role, sigma factors are initiation factors that promote the attachment of RNA polymerase to specific initiation sites and are then released. This sigma factor is the primary sigma factor during exponential growth. The polypeptide is RNA polymerase sigma factor SigA (Mycoplasma pneumoniae (strain ATCC 29342 / M129 / Subtype 1) (Mycoplasmoides pneumoniae)).